The following is a 61-amino-acid chain: Small ribosomal subunit protein uS14 (61 aa).

4 residues coordinate Zn(2+): C24, C27, C40, and C43.

This sequence belongs to the universal ribosomal protein uS14 family. Zinc-binding uS14 subfamily. Part of the 30S ribosomal subunit. Contacts proteins S3 and S10. Requires Zn(2+) as cofactor.

Functionally, binds 16S rRNA, required for the assembly of 30S particles and may also be responsible for determining the conformation of the 16S rRNA at the A site. The sequence is that of Small ribosomal subunit protein uS14 from Heliobacterium modesticaldum (strain ATCC 51547 / Ice1).